A 483-amino-acid chain; its full sequence is Scarecrow-like protein 26 (483 aa).

Positions 95–477 constitute a GRAS domain; the sequence is KTDESKGLRL…RRLVSASFWA (383 aa). Residues 102–165 are leucine repeat I (LRI); that stretch reads LRLVHLLVAA…SKLLERDSVL (64 aa). A VHIID region spans residues 184 to 251; it reads FELLQNMSPY…PSAQHLRITA (68 aa). Residues 215 to 219 carry the VHIID motif; that stretch reads IHIVD. Residues 267–299 form a leucine repeat II (LRII) region; the sequence is ETGRRLTAFADSIGQPFSYQHCKLDTNAFSTSS. Positions 308–400 are PFYRE; sequence VVINCMLHLP…RVFIGPWVAN (93 aa). Residues 403–477 form an SAW region; sequence TRITANDAEV…RRLVSASFWA (75 aa).

It belongs to the GRAS family. Expressed in seedlings, roots, leaves and flowers.

Its subcellular location is the nucleus. Functionally, probable transcription factor involved in plant development. The polypeptide is Scarecrow-like protein 26 (SCL26) (Arabidopsis thaliana (Mouse-ear cress)).